Here is a 73-residue protein sequence, read N- to C-terminus: Tetrahydromethanopterin S-methyltransferase subunit F (73 aa).

A helical membrane pass occupies residues 52–72; that stretch reads IGFAAGFLFSLLMVIVLPLLF.

It belongs to the MtrF family. As to quaternary structure, the complex is composed of 8 subunits; MtrA, MtrB, MtrC, MtrD, MtrE, MtrF, MtrG and MtrH.

Its subcellular location is the cell membrane. It carries out the reaction 5-methyl-5,6,7,8-tetrahydromethanopterin + coenzyme M + 2 Na(+)(in) = 5,6,7,8-tetrahydromethanopterin + methyl-coenzyme M + 2 Na(+)(out). Its pathway is one-carbon metabolism; methanogenesis from CO(2); methyl-coenzyme M from 5,10-methylene-5,6,7,8-tetrahydromethanopterin: step 2/2. Functionally, part of a complex that catalyzes the formation of methyl-coenzyme M and tetrahydromethanopterin from coenzyme M and methyl-tetrahydromethanopterin. This is an energy-conserving, sodium-ion translocating step. The sequence is that of Tetrahydromethanopterin S-methyltransferase subunit F from Methanosarcina barkeri (strain Fusaro / DSM 804).